The primary structure comprises 286 residues: Phospholipase A1 (286 aa).

An N-terminal signal peptide occupies residues 1–20 (MRISLACLAALCALPAGVMA). At 21 to 49 (QDASVHDKPAVRGSIIANLLQDHDNPFLL) the chain is on the periplasmic side. Residues 50–62 (YPYESNYLLYTWT) traverse the membrane as a beta stranded segment. Residues 63-81 (SDLNKEAIRSYDWAENARK) lie on the Extracellular side of the membrane. A beta stranded membrane pass occupies residues 82-96 (DEVKFQLSLAFPLWR). The Periplasmic portion of the chain corresponds to 97–102 (GILGDN). Residues 103–115 (SLLGASYTQKSWW) traverse the membrane as a beta stranded segment. Over 116-125 (QLSNSKESAP) the chain is Extracellular. Ca(2+) is bound at residue Ser-123. Residues 126 to 145 (FRETNYEPQLFLGFATDYQF) form a beta stranded membrane-spanning segment. Over 146–147 (AG) the chain is Periplasmic. A beta stranded membrane pass occupies residues 148-161 (WTLRDIEMGYNHDS). Catalysis depends on His-159, which acts as the Proton acceptor. Ser-161 acts as the Nucleophile in catalysis. Residues 162 to 170 (NGRSDPTSR) lie on the Extracellular side of the membrane. Arg-164 and Ser-169 together coordinate Ca(2+). Residues 171–183 (SWNRLYARLMAQN) traverse the membrane as a beta stranded segment. The Periplasmic portion of the chain corresponds to 184–185 (GN). A beta stranded membrane pass occupies residues 186-195 (WLVEVKPWYV). Topologically, residues 196–213 (VGSTDDNPDITKYMGYYR) are extracellular. Asp-201 is a Ca(2+) binding site. The beta stranded transmembrane segment at 214–220 (LKVGYQL) threads the bilayer. The Periplasmic segment spans residues 221 to 222 (GE). Residues 223–231 (AILSAQGQY) form a beta stranded membrane-spanning segment. Over 232–238 (NWNTGYG) the chain is Extracellular. The chain crosses the membrane as a beta stranded span at residues 239–247 (GAELGVSYP). Topologically, residues 248–252 (ITKHV) are periplasmic. A beta stranded transmembrane segment spans residues 253–262 (RAYTQIYSGY). The Extracellular portion of the chain corresponds to 263-271 (GESLIDYNF). A beta stranded membrane pass occupies residues 272 to 283 (NQTRVGVGLMLN). Topologically, residues 284–286 (DLF) are periplasmic.

The protein belongs to the phospholipase A1 family. As to quaternary structure, homodimer; dimerization is reversible, and the dimeric form is the active one. Ca(2+) serves as cofactor.

It localises to the cell outer membrane. The enzyme catalyses a 1,2-diacyl-sn-glycero-3-phosphocholine + H2O = a 2-acyl-sn-glycero-3-phosphocholine + a fatty acid + H(+). The catalysed reaction is a 1,2-diacyl-sn-glycero-3-phosphocholine + H2O = a 1-acyl-sn-glycero-3-phosphocholine + a fatty acid + H(+). Functionally, hydrolysis of phosphatidylcholine with phospholipase A2 (EC 3.1.1.4) and phospholipase A1 (EC 3.1.1.32) activities. The protein is Phospholipase A1 (pldA) of Klebsiella pneumoniae.